A 225-amino-acid polypeptide reads, in one-letter code: Adenylate kinase (225 aa).

10–15 (GSGKGT) contributes to the ATP binding site. The interval 30–59 (ESGAIFRENISKGTEIGKKAKEYIDRGDLV) is NMP. AMP-binding positions include Ser-31, Arg-36, 57-59 (DLV), 85-88 (GFPR), and Gln-92. An LID region spans residues 126–165 (GRRLCENDNNHPNNIFIDAIKPDGDKCRVCGGALSARSDD). Position 127 (Arg-127) interacts with ATP. Positions 162 and 174 each coordinate AMP. Pro-211 provides a ligand contact to ATP.

The protein belongs to the adenylate kinase family. In terms of assembly, monomer.

The protein localises to the cytoplasm. The catalysed reaction is AMP + ATP = 2 ADP. The protein operates within purine metabolism; AMP biosynthesis via salvage pathway; AMP from ADP: step 1/1. Its function is as follows. Catalyzes the reversible transfer of the terminal phosphate group between ATP and AMP. Plays an important role in cellular energy homeostasis and in adenine nucleotide metabolism. The sequence is that of Adenylate kinase from Desulfatibacillum aliphaticivorans.